A 310-amino-acid chain; its full sequence is Protein FAM153A (310 aa).

Disordered stretches follow at residues L39–P58, Q108–E136, S156–E184, and T250–R297. Low complexity predominate over residues S259–E268. Residues A270 to T282 show a composition bias toward basic and acidic residues. Residues R283 to R297 show a composition bias toward basic residues.

The protein belongs to the FAM153 family.

The sequence is that of Protein FAM153A (FAM153A) from Homo sapiens (Human).